We begin with the raw amino-acid sequence, 438 residues long: Xylose isomerase (438 aa).

Residues H100 and D103 contribute to the active site. Mg(2+) contacts are provided by E231, E267, H270, D295, D306, D308, and D338.

The protein belongs to the xylose isomerase family. Homotetramer. Requires Mg(2+) as cofactor.

It is found in the cytoplasm. The enzyme catalyses alpha-D-xylose = alpha-D-xylulofuranose. This is Xylose isomerase from Thermoanaerobacter sp. (strain X514).